A 154-amino-acid polypeptide reads, in one-letter code: MQAIIQLRGPVNMSGAVEDTLAMLNLHRVNHCALVPETETYRGMITKVNEYVAHGEPSVEVLSTVLERRVESENSDETVDETWLEAHTEYDDFDALATALIEEETTLRDQGLSPVLRLHPPRGGHRGQKHPTAEGGQIGVHDTDQINELLEAMR.

Positions 114 to 139 are disordered; the sequence is PVLRLHPPRGGHRGQKHPTAEGGQIG. Positions 119–129 are enriched in basic residues; the sequence is HPPRGGHRGQK.

Belongs to the universal ribosomal protein uL30 family. In terms of assembly, part of the 50S ribosomal subunit.

In Haloquadratum walsbyi (strain DSM 16790 / HBSQ001), this protein is Large ribosomal subunit protein uL30.